We begin with the raw amino-acid sequence, 39 residues long: Small basic protein 1 (39 aa).

Gln-1 carries the post-translational modification Pyrrolidone carboxylic acid. 3 cysteine pairs are disulfide-bonded: Cys-6–Cys-32, Cys-10–Cys-26, and Cys-14–Cys-31.

It localises to the secreted. In Anas platyrhynchos (Mallard), this protein is Small basic protein 1.